The sequence spans 89 residues: Small ribosomal subunit protein bS20 (89 aa).

This sequence belongs to the bacterial ribosomal protein bS20 family.

Binds directly to 16S ribosomal RNA. The protein is Small ribosomal subunit protein bS20 of Hahella chejuensis (strain KCTC 2396).